We begin with the raw amino-acid sequence, 312 residues long: HPr kinase/phosphorylase (312 aa).

Residues histidine 139 and lysine 160 contribute to the active site. 154–161 (GDSGIGKS) is an ATP binding site. A Mg(2+)-binding site is contributed by serine 161. Aspartate 178 serves as the catalytic Proton acceptor; for phosphorylation activity. Proton donor; for dephosphorylation activity. The interval 202 to 211 (IEIRGVGIID) is important for the catalytic mechanism of both phosphorylation and dephosphorylation. A Mg(2+)-binding site is contributed by glutamate 203. The active site involves arginine 244. Residues 265–270 (PVKTGR) form an important for the catalytic mechanism of dephosphorylation region.

It belongs to the HPrK/P family. In terms of assembly, homohexamer. It depends on Mg(2+) as a cofactor.

The enzyme catalyses [HPr protein]-L-serine + ATP = [HPr protein]-O-phospho-L-serine + ADP + H(+). It catalyses the reaction [HPr protein]-O-phospho-L-serine + phosphate + H(+) = [HPr protein]-L-serine + diphosphate. Catalyzes the ATP- as well as the pyrophosphate-dependent phosphorylation of a specific serine residue in HPr, a phosphocarrier protein of the phosphoenolpyruvate-dependent sugar phosphotransferase system (PTS). HprK/P also catalyzes the pyrophosphate-producing, inorganic phosphate-dependent dephosphorylation (phosphorolysis) of seryl-phosphorylated HPr (P-Ser-HPr). The two antagonistic activities of HprK/P are regulated by several intracellular metabolites, which change their concentration in response to the absence or presence of rapidly metabolisable carbon sources (glucose, fructose, etc.) in the growth medium. Therefore, by controlling the phosphorylation state of HPr, HPrK/P is a sensor enzyme that plays a major role in the regulation of carbon metabolism and sugar transport: it mediates carbon catabolite repression (CCR), and regulates PTS-catalyzed carbohydrate uptake and inducer exclusion. The polypeptide is HPr kinase/phosphorylase (Streptococcus pneumoniae (strain ATCC BAA-255 / R6)).